A 124-amino-acid chain; its full sequence is Large ribosomal subunit protein uL18 (124 aa).

This sequence belongs to the universal ribosomal protein uL18 family. As to quaternary structure, part of the 50S ribosomal subunit; part of the 5S rRNA/L5/L18/L25 subcomplex. Contacts the 5S and 23S rRNAs.

Its function is as follows. This is one of the proteins that bind and probably mediate the attachment of the 5S RNA into the large ribosomal subunit, where it forms part of the central protuberance. The protein is Large ribosomal subunit protein uL18 of Frankia casuarinae (strain DSM 45818 / CECT 9043 / HFP020203 / CcI3).